Reading from the N-terminus, the 174-residue chain is Shikimate kinase 2 (174 aa).

Residue 12 to 17 participates in ATP binding; it reads GCGKTT. 2 residues coordinate Mg(2+): Thr16 and Asp32. Substrate is bound by residues Asp34, Arg58, and Gly79. Residues 112 to 126 form an LID domain region; sequence QAAPEEDLRPTLTGK. Position 120 (Arg120) interacts with ATP. Arg139 lines the substrate pocket.

It belongs to the shikimate kinase family. AroL subfamily. In terms of assembly, monomer. Requires Mg(2+) as cofactor.

The protein localises to the cytoplasm. It catalyses the reaction shikimate + ATP = 3-phosphoshikimate + ADP + H(+). Its pathway is metabolic intermediate biosynthesis; chorismate biosynthesis; chorismate from D-erythrose 4-phosphate and phosphoenolpyruvate: step 5/7. Functionally, catalyzes the specific phosphorylation of the 3-hydroxyl group of shikimic acid using ATP as a cosubstrate. The protein is Shikimate kinase 2 of Shigella dysenteriae serotype 1 (strain Sd197).